The sequence spans 4367 residues: Dynein heavy chain, cytoplasmic (4367 aa).

Residues 1–13 (MMDSVPSPPPQPS) show a composition bias toward pro residues. The segment at 1–20 (MMDSVPSPPPQPSPDANGVA) is disordered. A stem region spans residues 1-1904 (MMDSVPSPPP…HIKMANAKLN (1904 aa)). 5 coiled-coil regions span residues 676–693 (ARQIERQLDQYMKKVEQV), 1176–1215 (IKFASRLGNRMREVYAELEKARKDLEGQAMTANSTAEAVR), 1327–1351 (LTHFEQRITKLQEESAMVAKAKEAL), 1557–1574 (YKEFEEEASSWEEKLNRV), and 1637–1668 (NIPNVQKSLERLAELLNKIQKALGEYLEKERV). AAA stretches follow at residues 1905–2130 (YGFE…VLVS), 2202–2460 (EAIR…FTVA), 2566–2815 (EVNT…WVRG), and 2909–3179 (TFCE…QGKI). Position 1943–1950 (1943–1950 (GPAGTGKT)) interacts with ATP. Residues 2195 to 2218 (ASLEKLQEAIRRLAAERQLVVNDI) are a coiled coil. Residues 2240-2247 (GNSGSGKS), 2605-2612 (GPPGSGKT), and 2947-2954 (GVSGSGKT) each bind ATP. Coiled-coil stretches lie at residues 3193-3296 (QYVK…LARA), 3423-3481 (PLRE…SRVQ), and 3778-3809 (VIETLETLKTEAAEISAKMSNTEGVMAEVEQI). The tract at residues 3193 to 3481 (QYVKLYNEKR…AIKAEMSRVQ (289 aa)) is stalk. 2 AAA regions span residues 3565–3794 (LSTA…EISA) and 4003–4215 (AERF…VIDT).

Belongs to the dynein heavy chain family. In terms of assembly, consists of at least two heavy chains and a number of intermediate and light chains.

Its subcellular location is the cytoplasm. The protein localises to the cytoskeleton. Functionally, cytoplasmic dynein acts as a motor for the intracellular retrograde motility of vesicles and organelles along microtubules. Dynein has ATPase activity; the force-producing power stroke is thought to occur on release of ADP. Required to maintain uniform nuclear distribution in hyphae. This chain is Dynein heavy chain, cytoplasmic (ro-1), found in Neurospora crassa (strain ATCC 24698 / 74-OR23-1A / CBS 708.71 / DSM 1257 / FGSC 987).